Here is a 366-residue protein sequence, read N- to C-terminus: Carbamoyl phosphate synthase small chain (366 aa).

Residues 1–168 (MYGILVLEDG…KETVIYNAED (168 aa)) form a CPSase region. Serine 45, glycine 220, and glycine 222 together coordinate L-glutamine. Residues 172–363 (RCVLIDCGVK…VELGIKFKAE (192 aa)) enclose the Glutamine amidotransferase type-1 domain. Cysteine 247 serves as the catalytic Nucleophile. Positions 248, 251, 289, 291, and 292 each coordinate L-glutamine. Active-site residues include histidine 336 and glutamate 338.

It belongs to the CarA family. As to quaternary structure, composed of two chains; the small (or glutamine) chain promotes the hydrolysis of glutamine to ammonia, which is used by the large (or ammonia) chain to synthesize carbamoyl phosphate. Tetramer of heterodimers (alpha,beta)4.

It carries out the reaction hydrogencarbonate + L-glutamine + 2 ATP + H2O = carbamoyl phosphate + L-glutamate + 2 ADP + phosphate + 2 H(+). The enzyme catalyses L-glutamine + H2O = L-glutamate + NH4(+). The protein operates within amino-acid biosynthesis; L-arginine biosynthesis; carbamoyl phosphate from bicarbonate: step 1/1. It participates in pyrimidine metabolism; UMP biosynthesis via de novo pathway; (S)-dihydroorotate from bicarbonate: step 1/3. Functionally, small subunit of the glutamine-dependent carbamoyl phosphate synthetase (CPSase). CPSase catalyzes the formation of carbamoyl phosphate from the ammonia moiety of glutamine, carbonate, and phosphate donated by ATP, constituting the first step of 2 biosynthetic pathways, one leading to arginine and/or urea and the other to pyrimidine nucleotides. The small subunit (glutamine amidotransferase) binds and cleaves glutamine to supply the large subunit with the substrate ammonia. This is Carbamoyl phosphate synthase small chain from Methanococcus maripaludis (strain C5 / ATCC BAA-1333).